Reading from the N-terminus, the 397-residue chain is Phosphoglycerate kinase (397 aa).

Residues 21–23, Arg-37, 60–63, Arg-119, and Arg-152 contribute to the substrate site; these read DFN and HLGR. ATP is bound by residues Lys-202, Gly-294, Glu-325, and 351-354; that span reads GGDS.

It belongs to the phosphoglycerate kinase family. As to quaternary structure, monomer.

It is found in the cytoplasm. It catalyses the reaction (2R)-3-phosphoglycerate + ATP = (2R)-3-phospho-glyceroyl phosphate + ADP. It functions in the pathway carbohydrate degradation; glycolysis; pyruvate from D-glyceraldehyde 3-phosphate: step 2/5. This chain is Phosphoglycerate kinase, found in Pseudothermotoga lettingae (strain ATCC BAA-301 / DSM 14385 / NBRC 107922 / TMO) (Thermotoga lettingae).